The chain runs to 126 residues: Fluoride-specific ion channel FluC (126 aa).

Transmembrane regions (helical) follow at residues 3–23, 37–57, 70–90, and 104–124; these read FAIL…RFLV, IGTL…IACV, VIGL…MDNV, and NVLL…HWLM. Residues Gly-77 and Thr-80 each contribute to the Na(+) site.

Belongs to the fluoride channel Fluc/FEX (TC 1.A.43) family.

It is found in the cell inner membrane. It catalyses the reaction fluoride(in) = fluoride(out). Na(+) is not transported, but it plays an essential structural role and its presence is essential for fluoride channel function. Its function is as follows. Fluoride-specific ion channel. Important for reducing fluoride concentration in the cell, thus reducing its toxicity. In Vibrio cholerae serotype O1 (strain ATCC 39541 / Classical Ogawa 395 / O395), this protein is Fluoride-specific ion channel FluC.